The following is a 325-amino-acid chain: Lipid droplet-associated hydrolase (325 aa).

Ser-139 functions as the Nucleophile in the catalytic mechanism. Active-site charge relay system residues include Asp-271 and His-300.

This sequence belongs to the AB hydrolase superfamily. LDAH family.

It localises to the lipid droplet. It is found in the endoplasmic reticulum. It carries out the reaction a cholesterol ester + H2O = cholesterol + a fatty acid + H(+). Functionally, probable serine lipid hydrolase associated with lipid droplets. Has low cholesterol esterase activity. Appears to lack triglyceride lipase activity. Involved in cholesterol and triglyceride homeostasis; stimulates cellular triglyceride accumulation and cellular cholesterol release. Acts antagonistically with PNPLA2/ATGL in regulation of cellular lipid stores. May regulate triglyceride accumulation indirectly through stimulation of PNPLA2/ATGL ubiquitination and proteasomal degradation. Promotes microtubule-dependent lipid droplet fusion. Highly expressed in macrophage-rich areas in atherosclerotic lesions, suggesting that it could promote cholesterol ester turnover in macrophages. The chain is Lipid droplet-associated hydrolase from Pongo abelii (Sumatran orangutan).